The chain runs to 380 residues: Succinate--CoA ligase [ADP-forming] subunit beta (380 aa).

In terms of domain architecture, ATP-grasp spans 9–237; sequence RDLLARFGIP…PSAEPEAERR (229 aa). ATP-binding positions include lysine 45, 52–54, valine 94, and glutamate 99; that span reads GRG. Residues asparagine 192 and aspartate 206 each contribute to the Mg(2+) site. Substrate is bound by residues asparagine 257 and 314-316; that span reads GIT.

This sequence belongs to the succinate/malate CoA ligase beta subunit family. In terms of assembly, heterotetramer of two alpha and two beta subunits. Mg(2+) serves as cofactor.

It catalyses the reaction succinate + ATP + CoA = succinyl-CoA + ADP + phosphate. The catalysed reaction is GTP + succinate + CoA = succinyl-CoA + GDP + phosphate. Its pathway is carbohydrate metabolism; tricarboxylic acid cycle; succinate from succinyl-CoA (ligase route): step 1/1. Succinyl-CoA synthetase functions in the citric acid cycle (TCA), coupling the hydrolysis of succinyl-CoA to the synthesis of either ATP or GTP and thus represents the only step of substrate-level phosphorylation in the TCA. The beta subunit provides nucleotide specificity of the enzyme and binds the substrate succinate, while the binding sites for coenzyme A and phosphate are found in the alpha subunit. The sequence is that of Succinate--CoA ligase [ADP-forming] subunit beta from Chloroflexus aurantiacus (strain ATCC 29366 / DSM 635 / J-10-fl).